Reading from the N-terminus, the 574-residue chain is MAIRARSWRPPPPPLLLLLLWVTGQAAPVAGLGLGSDSELQIERRFVPEECPRTVRSGDFVRYHYVGTFPDGQKFDSSYDRDSTFNVFVGKGQLIAGMDQALVGMCVNERRFVKIPPKLAYGSDGVSGVIPPDSVLHFDVLLMDIWNSEDQVQIHTYFKPPSCPRTIQVSDFVRYHYNGTFLDGTLFDSSHNRMKTYDTYVGIGWLIPGMDKGLLGMCVGEKRIITIPPFLAYGEDGDGKDIPGQASLVFDVALLDLHNPKDGISIENKVVPENCERRSQSGDFLRYHYNGTLLDGTFFDSSYSRNRTFDTYIGQGYVIPGIDEGLLGVCIGEKRRIVVPPHLGYGEEGRGNIPGSAVLVFDIHVIDFHNPSDSISITSHYKPPDCSVLSKKGDYLKYHYNASLLDGTLLDSTWNLGKTYNIVLGFGQVVLGMDMGLREMCVGEKRTVIIPPHLGYGEAGVDGEVPGSAVLVFDIELLELVAGLPEGYMFVWNGEVSANLFEEIDKDGDGEVLLEEFSEYIHAQVASGKGKLAPGFDAEMIVKNMFTNQDRNGDGKVTAEEFKLKDQETKHDEL.

Positions 1–26 (MAIRARSWRPPPPPLLLLLLWVTGQA) are cleaved as a signal peptide. PPIase FKBP-type domains lie at 58-146 (GDFV…MDIW), 170-258 (SDFV…LDLH), 282-369 (GDFL…IDFH), and 393-481 (GDYL…LELV). N-linked (GlcNAc...) asparagine glycosylation is found at N178, N290, N306, and N401. 2 EF-hand domains span residues 492–527 (WNGEVSANLFEEIDKDGDGEVLLEEFSEYIHAQVAS) and 537–572 (DAEMIVKNMFTNQDRNGDGKVTAEEFKLKDQETKHD). Residues D505, D507, D509, E511, E516, D550, N552, D554, K556, and E561 each contribute to the Ca(2+) site. The Prevents secretion from ER signature appears at 571–574 (HDEL).

Post-translationally, phosphorylated.

The protein resides in the endoplasmic reticulum. It catalyses the reaction [protein]-peptidylproline (omega=180) = [protein]-peptidylproline (omega=0). With respect to regulation, inhibited by FK506. Functionally, PPIases accelerate the folding of proteins during protein synthesis. This is Peptidyl-prolyl cis-trans isomerase FKBP9 (FKBP9) from Bos taurus (Bovine).